A 312-amino-acid chain; its full sequence is Zinc transporter ZitB (312 aa).

Helical transmembrane passes span Leu16 to Leu36, Leu40 to Leu60, Leu81 to Val101, Thr117 to Leu137, Leu153 to Leu173, and Trp177 to Trp197.

The protein belongs to the cation diffusion facilitator (CDF) transporter (TC 2.A.4) family. SLC30A subfamily.

It is found in the cell inner membrane. In terms of biological role, involved in zinc efflux across the cytoplasmic membrane, thus reducing zinc accumulation in the cytoplasm and rendering bacteria more resistant to zinc. It may contribute to zinc homeostasis at low concentrations of zinc. The polypeptide is Zinc transporter ZitB (Yersinia pestis).